The following is a 296-amino-acid chain: Iron-sulfur cluster carrier protein (296 aa).

Residues 1–17 are compositionally biased toward low complexity; the sequence is MSSNPFRIQNPQPQPQR. The tract at residues 1–23 is disordered; it reads MSSNPFRIQNPQPQPQRQPRDLR. An ATP-binding site is contributed by 52-59; the sequence is GKGGVGKS.

This sequence belongs to the Mrp/NBP35 ATP-binding proteins family. In terms of assembly, homodimer.

In terms of biological role, binds and transfers iron-sulfur (Fe-S) clusters to target apoproteins. Can hydrolyze ATP. This is Iron-sulfur cluster carrier protein from Saccharolobus solfataricus (strain ATCC 35092 / DSM 1617 / JCM 11322 / P2) (Sulfolobus solfataricus).